The chain runs to 334 residues: Transcription initiation factor IIB (334 aa).

Residues 34–65 (EELVCPMCDSKNIIKDYEKAEIVCEDCGCVLQ) form a TFIIB-type zinc finger. Residues Cys-38, Cys-41, Cys-57, and Cys-60 each contribute to the Zn(2+) site. Repeat copies occupy residues 151–234 (SELD…SREL) and 245–326 (DYVP…ELTE).

The protein belongs to the TFIIB family.

In terms of biological role, stabilizes TBP binding to an archaeal box-A promoter. Also responsible for recruiting RNA polymerase II to the pre-initiation complex (DNA-TBP-TFIIB). The protein is Transcription initiation factor IIB of Methanococcus aeolicus (strain ATCC BAA-1280 / DSM 17508 / OCM 812 / Nankai-3).